Consider the following 308-residue polypeptide: Ribosomal RNA small subunit methyltransferase H (308 aa).

S-adenosyl-L-methionine is bound by residues 34 to 36 (GGH), Asp54, Phe80, Asp101, and Gln108.

The protein belongs to the methyltransferase superfamily. RsmH family.

It is found in the cytoplasm. The enzyme catalyses cytidine(1402) in 16S rRNA + S-adenosyl-L-methionine = N(4)-methylcytidine(1402) in 16S rRNA + S-adenosyl-L-homocysteine + H(+). In terms of biological role, specifically methylates the N4 position of cytidine in position 1402 (C1402) of 16S rRNA. This is Ribosomal RNA small subunit methyltransferase H from Ureaplasma parvum serovar 3 (strain ATCC 27815 / 27 / NCTC 11736).